Consider the following 260-residue polypeptide: G patch domain-containing protein 11 (260 aa).

A coiled-coil region spans residues 25–61; it reads MLRQIREARRKEEKRQEANLKNRQKSIKEEEQERRDM. The tract at residues 33–60 is disordered; that stretch reads RRKEEKRQEANLKNRQKSIKEEEQERRD. Residues 69 to 115 enclose the G-patch domain; the sequence is CENKGFALLQKMGYKSGQALGKSGDGIVEPIPLNVKTGKSGIGHETL. The residue at position 123 (K123) is an N6-acetyllysine. The segment at 187–212 is disordered; that stretch reads WLRPEEETEEETEEEKEQDEDEYKSE. Residues 192-210 show a composition bias toward acidic residues; the sequence is EETEEETEEEKEQDEDEYK.

Belongs to the GPATCH11 family.

Its subcellular location is the chromosome. The protein localises to the centromere. The protein resides in the kinetochore. In Bos taurus (Bovine), this protein is G patch domain-containing protein 11 (GPATCH11).